The sequence spans 1432 residues: Probable ATP-dependent RNA helicase spindle-E (1432 aa).

One can recognise a Helicase ATP-binding domain in the interval 125 to 292 (MKAIRENTVV…FATKNGIPPV (168 aa)). 138-145 (GETGCGKT) provides a ligand contact to ATP. The short motif at 238-241 (DEVH) is the DEAH box element. One can recognise a Helicase C-terminal domain in the interval 342-525 (VIDNMERRTE…SSVLKAKELN (184 aa)). The 64-residue stretch at 936–999 (AGSITKNLKL…RFMSNQLKRE (64 aa)) folds into the Tudor domain.

This sequence belongs to the DEAD box helicase family. DEAH subfamily.

The protein resides in the cytoplasm. It catalyses the reaction ATP + H2O = ADP + phosphate + H(+). Functionally, probable ATP-binding RNA helicase which plays a central role during spermatogenesis and oogenesis by repressing transposable elements and preventing their mobilization, which is essential for the germline integrity. Acts via the piRNA metabolic process, which mediates the repression of transposable elements during meiosis by forming complexes composed of piRNAs and Piwi and govern the methylation and subsequent repression of transposons. Involved in the repression of LTR retrotransposon copia. Also involved in telomere regulation by repressing specialized telomeric retroelements HeT-A, TAHRE, and TART; Drosophila telomeres being maintained by transposition of specialized telomeric retroelements. Involved in telomeric trans-silencing, a repression mechanism by which a transposon or a transgene inserted in subtelomeric heterochromatin has the capacity to repress in trans in the female germline, a homologous transposon, or transgene located in euchromatin. Involved in the repression of testis-expressed Stellate genes by the homologous Su(Ste) repeats. Required for anteroposterior and dorsoventral axis formation during oogenesis. The chain is Probable ATP-dependent RNA helicase spindle-E (spn-E) from Drosophila willistoni (Fruit fly).